A 251-amino-acid chain; its full sequence is MSEALPLSPAEFEQALRAKGAYYHIHHPYHVAMYEGRATREQIQGWVANRFYYQVNIPMKDAAILANCPDREVRREWIQRLLDHDGAPGEDGGIEAWLRLGQAVGLDPDQLRSQELVLPGVRFAVDAYVNFARRASWQEAASSSLTELFAPQIHQSRLDSWPQHYPWIDPAGYEYFRTRLGQARRDVEHGLTITLQHYTTRAAQERMLEILQFKLDILWSMLDAMSMAYELHRPPYHTVTQQRVWHKGIAL.

Belongs to the PqqC family.

It catalyses the reaction 6-(2-amino-2-carboxyethyl)-7,8-dioxo-1,2,3,4,7,8-hexahydroquinoline-2,4-dicarboxylate + 3 O2 = pyrroloquinoline quinone + 2 H2O2 + 2 H2O + H(+). The protein operates within cofactor biosynthesis; pyrroloquinoline quinone biosynthesis. Ring cyclization and eight-electron oxidation of 3a-(2-amino-2-carboxyethyl)-4,5-dioxo-4,5,6,7,8,9-hexahydroquinoline-7,9-dicarboxylic-acid to PQQ. This chain is Pyrroloquinoline-quinone synthase, found in Pseudomonas putida (strain W619).